The sequence spans 269 residues: Indole-3-glycerol phosphate synthase (269 aa).

It belongs to the TrpC family.

The enzyme catalyses 1-(2-carboxyphenylamino)-1-deoxy-D-ribulose 5-phosphate + H(+) = (1S,2R)-1-C-(indol-3-yl)glycerol 3-phosphate + CO2 + H2O. Its pathway is amino-acid biosynthesis; L-tryptophan biosynthesis; L-tryptophan from chorismate: step 4/5. In Rhodococcus jostii (strain RHA1), this protein is Indole-3-glycerol phosphate synthase.